A 366-amino-acid chain; its full sequence is 4-hydroxy-3-methylbut-2-en-1-yl diphosphate synthase (flavodoxin) (366 aa).

The [4Fe-4S] cluster site is built by C270, C273, C305, and E312.

The protein belongs to the IspG family. [4Fe-4S] cluster is required as a cofactor.

The catalysed reaction is (2E)-4-hydroxy-3-methylbut-2-enyl diphosphate + oxidized [flavodoxin] + H2O + 2 H(+) = 2-C-methyl-D-erythritol 2,4-cyclic diphosphate + reduced [flavodoxin]. The protein operates within isoprenoid biosynthesis; isopentenyl diphosphate biosynthesis via DXP pathway; isopentenyl diphosphate from 1-deoxy-D-xylulose 5-phosphate: step 5/6. Its function is as follows. Converts 2C-methyl-D-erythritol 2,4-cyclodiphosphate (ME-2,4cPP) into 1-hydroxy-2-methyl-2-(E)-butenyl 4-diphosphate. In Acidithiobacillus ferrooxidans (strain ATCC 53993 / BNL-5-31) (Leptospirillum ferrooxidans (ATCC 53993)), this protein is 4-hydroxy-3-methylbut-2-en-1-yl diphosphate synthase (flavodoxin).